The primary structure comprises 85 residues: Small ribosomal subunit protein bS16c (85 aa).

This sequence belongs to the bacterial ribosomal protein bS16 family.

The protein localises to the plastid. It localises to the chloroplast. This is Small ribosomal subunit protein bS16c from Oryza nivara (Indian wild rice).